A 481-amino-acid polypeptide reads, in one-letter code: 4-O-methyl-glucuronoyl methylesterase (481 aa).

Residues 1 to 21 (MVSQTVVSSLLVVLGAAGVRA) form the signal peptide. The 37-residue stretch at 23 to 59 (QRQSLWGQCGGSGWSGPTLCVDGAWCNPQNQWYHQCI) folds into the CBM1 domain. 3 disulfides stabilise this stretch: C108–C143, C292–C428, and C324–C400. The short motif at 291–296 (GCSRNG) is the GXSYXG catalytic site motif element. Catalysis depends on S293, which acts as the Nucleophile. K297, Q339, E347, and W391 together coordinate substrate. Residue H427 is the Proton donor/acceptor of the active site.

It belongs to the carbohydrate esterase 15 (CE15) family.

The protein resides in the secreted. It carries out the reaction a 4-O-methyl-alpha-D-glucuronosyl ester derivative + H2O = 4-O-methyl-alpha-D-glucuronate derivative + an alcohol + H(+). Glucuronoyl esterase which may play a significant role in biomass degradation, as it is considered to disconnect hemicellulose from lignin through the hydrolysis of the ester bond between 4-O-methyl-D-glucuronic acid residues of glucuronoxylans and aromatic alcohols of lignin. The protein is 4-O-methyl-glucuronoyl methylesterase of Podospora anserina (strain S / ATCC MYA-4624 / DSM 980 / FGSC 10383) (Pleurage anserina).